Here is a 348-residue protein sequence, read N- to C-terminus: Putative S-adenosyl-L-methionine-dependent methyltransferase MRA_3439 (348 aa).

S-adenosyl-L-methionine-binding positions include Asp-171 and 200–201 (DL).

It belongs to the UPF0677 family.

Its function is as follows. Exhibits S-adenosyl-L-methionine-dependent methyltransferase activity. This Mycobacterium tuberculosis (strain ATCC 25177 / H37Ra) protein is Putative S-adenosyl-L-methionine-dependent methyltransferase MRA_3439.